A 409-amino-acid polypeptide reads, in one-letter code: MVSDSKLELPLPVNQQKPRRRRILKVHLLIAALILSAVGYLGKGKWIWTPERKAHFVLTHFPLIDGHNDLPIYLRENYDNRLLNISLEHLPGQTDIFRLRQGHVGGQFWSVFVECPSLDSNSSLSWNRTGEYEAVTQTLQQIDVVKRMALYYPKTFSLTDHSGKVKFDFLRNHISSMMGIEGLHQIAGSPSILRQFYDLGVRYATLAHNCDNVFADAAVDGKRTNKGLSPAGRDIVREMNRLGMIVDLSHTTPETMHQALDVSVAPAFFSHSSAKGVYDHPRNVPDDVLIRVKETDGVVMVNFYPAFISPHPENATIDTVVEHIMHIANVTGSYRHIGLGGDFDGIDMVPKGLEDVSKYPDLFVKLAERGLSITELADIAGRNVLRVWKTTEDLGHSIHEPPLEWEDDF.

Residues 1-39 form the signal peptide; sequence MVSDSKLELPLPVNQQKPRRRRILKVHLLIAALILSAVG. Residues histidine 67, aspartate 69, glutamate 181, histidine 250, and histidine 271 each contribute to the Zn(2+) site.

Belongs to the metallo-dependent hydrolases superfamily. Peptidase M19 family. Interacts with dil1. The cofactor is Zn(2+).

It carries out the reaction an L-aminoacyl-L-amino acid + H2O = 2 an L-alpha-amino acid. This is an uncharacterized protein from Schizosaccharomyces pombe (strain 972 / ATCC 24843) (Fission yeast).